The following is a 95-amino-acid chain: Large ribosomal subunit protein uL23 (95 aa).

Belongs to the universal ribosomal protein uL23 family. In terms of assembly, part of the 50S ribosomal subunit. Contacts protein L29, and trigger factor when it is bound to the ribosome.

One of the early assembly proteins it binds 23S rRNA. One of the proteins that surrounds the polypeptide exit tunnel on the outside of the ribosome. Forms the main docking site for trigger factor binding to the ribosome. This Coxiella burnetii (strain CbuK_Q154) (Coxiella burnetii (strain Q154)) protein is Large ribosomal subunit protein uL23.